A 240-amino-acid chain; its full sequence is Probable 2-phosphosulfolactate phosphatase (240 aa).

Belongs to the ComB family. Mg(2+) serves as cofactor.

The enzyme catalyses (2R)-O-phospho-3-sulfolactate + H2O = (2R)-3-sulfolactate + phosphate. The chain is Probable 2-phosphosulfolactate phosphatase from Clostridium kluyveri (strain NBRC 12016).